The sequence spans 406 residues: Cysteine desulfurase (406 aa).

Lys226 bears the N6-(pyridoxal phosphate)lysine mark. Cys364 functions as the Cysteine persulfide intermediate in the catalytic mechanism.

It belongs to the class-V pyridoxal-phosphate-dependent aminotransferase family. Csd subfamily. Homodimer. Interacts with SufE and the SufBCD complex composed of SufB, SufC and SufD. The interaction with SufE is required to mediate the direct transfer of the sulfur atom from the S-sulfanylcysteine. Requires pyridoxal 5'-phosphate as cofactor.

It localises to the cytoplasm. It catalyses the reaction (sulfur carrier)-H + L-cysteine = (sulfur carrier)-SH + L-alanine. The enzyme catalyses L-selenocysteine + AH2 = hydrogenselenide + L-alanine + A + H(+). The protein operates within cofactor biosynthesis; iron-sulfur cluster biosynthesis. Its function is as follows. Cysteine desulfurases mobilize the sulfur from L-cysteine to yield L-alanine, an essential step in sulfur metabolism for biosynthesis of a variety of sulfur-containing biomolecules. Component of the suf operon, which is activated and required under specific conditions such as oxidative stress and iron limitation. Acts as a potent selenocysteine lyase in vitro, that mobilizes selenium from L-selenocysteine. Selenocysteine lyase activity is however unsure in vivo. The protein is Cysteine desulfurase of Yersinia pestis bv. Antiqua (strain Angola).